Reading from the N-terminus, the 454-residue chain is UDP-N-acetylmuramate--L-alanine ligase (454 aa).

Residue 109–115 (GTHGKTT) participates in ATP binding.

The protein belongs to the MurCDEF family.

The protein resides in the cytoplasm. It catalyses the reaction UDP-N-acetyl-alpha-D-muramate + L-alanine + ATP = UDP-N-acetyl-alpha-D-muramoyl-L-alanine + ADP + phosphate + H(+). It participates in cell wall biogenesis; peptidoglycan biosynthesis. Its function is as follows. Cell wall formation. This chain is UDP-N-acetylmuramate--L-alanine ligase, found in Protochlamydia amoebophila (strain UWE25).